Here is a 327-residue protein sequence, read N- to C-terminus: tRNA dimethylallyltransferase (327 aa).

Residue 14–21 coordinates ATP; that stretch reads GPTASGKT. 16–21 provides a ligand contact to substrate; the sequence is TASGKT. Interaction with substrate tRNA regions lie at residues 39-42 and 163-167; these read DSAL and QRIQR.

This sequence belongs to the IPP transferase family. Monomer. It depends on Mg(2+) as a cofactor.

The enzyme catalyses adenosine(37) in tRNA + dimethylallyl diphosphate = N(6)-dimethylallyladenosine(37) in tRNA + diphosphate. Its function is as follows. Catalyzes the transfer of a dimethylallyl group onto the adenine at position 37 in tRNAs that read codons beginning with uridine, leading to the formation of N6-(dimethylallyl)adenosine (i(6)A). The protein is tRNA dimethylallyltransferase of Xanthomonas euvesicatoria pv. vesicatoria (strain 85-10) (Xanthomonas campestris pv. vesicatoria).